The following is a 524-amino-acid chain: B3 domain-containing protein Os07g0183700 (524 aa).

2 disordered regions span residues 94-152 and 191-232; these read DGEG…TSVS and PLQP…FQTQ. The segment covering 100-109 has biased composition (pro residues); the sequence is CAPPPSPIPA. 2 stretches are compositionally biased toward low complexity: residues 110–124 and 200–232; these read GPASSTVSAASSAPA and AAAAAGSPSATTPEPGHGEATPTTSSSAQFQTQ. The TF-B3 DNA-binding region spans 336 to 434; sequence SFVKPLTYTD…EMFMAVRRTR (99 aa).

It localises to the nucleus. This Oryza sativa subsp. japonica (Rice) protein is B3 domain-containing protein Os07g0183700.